A 344-amino-acid chain; its full sequence is Aromatic amino acid aminotransferase (344 aa).

Lys213 is subject to N6-(pyridoxal phosphate)lysine.

Belongs to the class-II pyridoxal-phosphate-dependent aminotransferase family. Homodimer. It depends on pyridoxal 5'-phosphate as a cofactor.

The catalysed reaction is an aromatic L-alpha-amino acid + 2-oxoglutarate = an aromatic oxo-acid + L-glutamate. Functionally, aminotransferase that catalyzes the conversion of aromatic amino acids and 2-oxoglutarate into corresponding aromatic oxo acids and L-glutamate. The sequence is that of Aromatic amino acid aminotransferase from Corynebacterium diphtheriae (strain ATCC 700971 / NCTC 13129 / Biotype gravis).